A 307-amino-acid chain; its full sequence is tRNA(Met) cytidine acetate ligase (307 aa).

Residues 12 to 25 (VVEYNPFHNGHIYQ), G106, N163, and R188 each bind ATP.

The protein belongs to the TmcAL family.

It localises to the cytoplasm. It catalyses the reaction cytidine(34) in elongator tRNA(Met) + acetate + ATP = N(4)-acetylcytidine(34) in elongator tRNA(Met) + AMP + diphosphate. Its function is as follows. Catalyzes the formation of N(4)-acetylcytidine (ac(4)C) at the wobble position of elongator tRNA(Met), using acetate and ATP as substrates. First activates an acetate ion to form acetyladenylate (Ac-AMP) and then transfers the acetyl group to tRNA to form ac(4)C34. This chain is tRNA(Met) cytidine acetate ligase, found in Mycoplasmopsis synoviae (strain 53) (Mycoplasma synoviae).